The primary structure comprises 469 residues: Cytosolic Fe-S cluster assembly factor NAR1 (469 aa).

Positions 20, 56, 59, 62, 168, 215, 394, and 398 each coordinate [4Fe-4S] cluster.

The protein belongs to the NARF family.

Functionally, component of the cytosolic Fe/S protein assembly machinery. Required for maturation of extramitochondrial Fe/S proteins. May play a role in the transfer of pre-assembled Fe/S clusters to target apoproteins. This Kluyveromyces lactis (strain ATCC 8585 / CBS 2359 / DSM 70799 / NBRC 1267 / NRRL Y-1140 / WM37) (Yeast) protein is Cytosolic Fe-S cluster assembly factor NAR1 (NAR1).